The chain runs to 596 residues: Two-component response regulator ARR12 (596 aa).

A Response regulatory domain is found at 18–133 (RVLAVDDDQT…ELKNIWQHVV (116 aa)). The residue at position 69 (Asp69) is a 4-aspartylphosphate. Positions 138–153 (DKNRGSNNNGDKRDGS) are enriched in basic and acidic residues. Residues 138-192 (DKNRGSNNNGDKRDGSGNEGVGNSDQNNGKGNRKRKDQYNEDEDEDRDDNDDSCA) are disordered. A compositionally biased stretch (polar residues) spans 158 to 167 (VGNSDQNNGK). The span at 177–189 (NEDEDEDRDDNDD) shows a compositional bias: acidic residues. Positions 194–197 (KKQR) match the Nuclear localization signal motif. Residues 197–247 (RVVWTVELHKKFVAAVNQLGYEKAMPKKILDLMNVEKLTRENVASHLQKFR) constitute a DNA-binding region (myb-like GARP). The disordered stretch occupies residues 437-467 (NAVSSSTHPPPPAHNSNSINHQFDVSPLPHS). Positions 450 to 459 (HNSNSINHQF) are enriched in polar residues.

It belongs to the ARR family. Type-B subfamily. As to quaternary structure, binds the target DNA as a monomer. Two-component system major event consists of a His-to-Asp phosphorelay between a sensor histidine kinase (HK) and a response regulator (RR). In plants, the His-to-Asp phosphorelay involves an additional intermediate named Histidine-containing phosphotransfer protein (HPt). This multistep phosphorelay consists of a His-Asp-His-Asp sequential transfer of a phosphate group between first a His and an Asp of the HK protein, followed by the transfer to a conserved His of the HPt protein and finally the transfer to an Asp in the receiver domain of the RR protein. In terms of tissue distribution, detected in the whole plant. Predominantly expressed in leaves. Expressed at the root transition zone.

Its subcellular location is the nucleus. Functionally, transcriptional activator that binds specifically to the DNA sequence 5'-[AG]GATT-3'. Functions as a response regulator involved in His-to-Asp phosphorelay signal transduction system. Phosphorylation of the Asp residue in the receiver domain activates the ability of the protein to promote the transcription of target genes. Could directly activate some type-A response regulators in response to cytokinins. Involved in the root-meristem size determination through the regulation of cell differentiation. Involved in activating SHY2 during meristem growth and controls PIN expression via activation of SHY2. The protein is Two-component response regulator ARR12 (ARR12) of Arabidopsis thaliana (Mouse-ear cress).